A 643-amino-acid chain; its full sequence is 1-deoxy-D-xylulose-5-phosphate synthase (643 aa).

Thiamine diphosphate contacts are provided by residues His-78 and 119–121 (AHS). Position 150 (Asp-150) interacts with Mg(2+). Residues 151–152 (GS), Asn-179, Tyr-288, and Glu-370 each bind thiamine diphosphate. Residue Asn-179 participates in Mg(2+) binding.

It belongs to the transketolase family. DXPS subfamily. Homodimer. The cofactor is Mg(2+). It depends on thiamine diphosphate as a cofactor.

The catalysed reaction is D-glyceraldehyde 3-phosphate + pyruvate + H(+) = 1-deoxy-D-xylulose 5-phosphate + CO2. It participates in metabolic intermediate biosynthesis; 1-deoxy-D-xylulose 5-phosphate biosynthesis; 1-deoxy-D-xylulose 5-phosphate from D-glyceraldehyde 3-phosphate and pyruvate: step 1/1. Its function is as follows. Catalyzes the acyloin condensation reaction between C atoms 2 and 3 of pyruvate and glyceraldehyde 3-phosphate to yield 1-deoxy-D-xylulose-5-phosphate (DXP). This chain is 1-deoxy-D-xylulose-5-phosphate synthase, found in Brucella abortus (strain S19).